A 294-amino-acid polypeptide reads, in one-letter code: Mating type protein mtA-1 (294 aa).

The alpha box DNA-binding region spans 46 to 101; it reads TAKKKVNGFMGFRSNYSPLFSYLPQKMRSPFMTILWQYDPYHNEWDFMCSVYSSIR.

It belongs to the MATALPHA1 family.

The protein localises to the nucleus. In terms of biological role, mating type proteins are sequence specific DNA-binding proteins that act as master switches in fungal differentiation by controlling gene expression in a cell type-specific fashion. Transcriptional activator that induces the transcription of alpha-specific genes. This is Mating type protein mtA-1 (MTA1) from Sordaria equina.